Consider the following 129-residue polypeptide: MNSFVLMATVIREPELRFTKENQTPVCEFLVEFPGMRDDSPKESLKVVGWGNLANTIKETYHPGDRLIIEGRLGMNMIERQEGFKEKRAELTASRISLVDSGNGINPGELSSPPEPEAVDLSNTDDIPF.

Positions 1 to 100 constitute an SSB domain; it reads MNSFVLMATV…LTASRISLVD (100 aa). Positions 99–129 are disordered; that stretch reads VDSGNGINPGELSSPPEPEAVDLSNTDDIPF.

In terms of assembly, homotetramer.

The protein localises to the cellular thylakoid membrane. The protein is Thylakoid-associated single-stranded DNA-binding protein slr1034 of Synechocystis sp. (strain ATCC 27184 / PCC 6803 / Kazusa).